Consider the following 178-residue polypeptide: Endoribonuclease YbeY (178 aa).

The Zn(2+) site is built by His-118, His-122, and His-128. The interval 158-178 (ADRQSEKDRRLLDKSRYFDEP) is disordered.

It belongs to the endoribonuclease YbeY family. Zn(2+) is required as a cofactor.

Its subcellular location is the cytoplasm. Functionally, single strand-specific metallo-endoribonuclease involved in late-stage 70S ribosome quality control and in maturation of the 3' terminus of the 16S rRNA. This Mycolicibacterium smegmatis (strain ATCC 700084 / mc(2)155) (Mycobacterium smegmatis) protein is Endoribonuclease YbeY.